We begin with the raw amino-acid sequence, 358 residues long: Aminodeoxyfutalosine deaminase (358 aa).

Residues His-32 and His-34 each contribute to the Zn(2+) site. Positions 87, 154, and 188 each coordinate substrate. A Zn(2+)-binding site is contributed by His-215. The active-site Proton donor is Glu-218. Residue Asp-296 participates in Zn(2+) binding.

This sequence belongs to the metallo-dependent hydrolases superfamily. Adenosine and AMP deaminases family. Zn(2+) serves as cofactor.

The enzyme catalyses 6-amino-6-deoxyfutalosine + H2O + H(+) = futalosine + NH4(+). It functions in the pathway quinol/quinone metabolism; menaquinone biosynthesis. In terms of biological role, catalyzes the deamination of aminodeoxyfutalosine (AFL) into futalosine (FL), a step in the biosynthesis of menaquinone (MK, vitamin K2). To a lesser extent, can also deaminate adenosine, 5'-methylthioadenosine, 5'-deoxyadenosine, and 2'-deoxyadenosine. This Streptomyces avermitilis (strain ATCC 31267 / DSM 46492 / JCM 5070 / NBRC 14893 / NCIMB 12804 / NRRL 8165 / MA-4680) protein is Aminodeoxyfutalosine deaminase (add2).